A 439-amino-acid chain; its full sequence is Hydrogenobyrinate a,c-diamide synthase (439 aa).

In terms of domain architecture, GATase cobBQ-type spans 247-439 (RIALAEDGAF…FFHAIARASA (193 aa)). Cysteine 329 acts as the Nucleophile in catalysis.

This sequence belongs to the CobB/CbiA family. The cofactor is Mg(2+).

The catalysed reaction is hydrogenobyrinate + 2 L-glutamine + 2 ATP + 2 H2O = hydrogenobyrinate a,c-diamide + 2 L-glutamate + 2 ADP + 2 phosphate + 2 H(+). Its pathway is cofactor biosynthesis; adenosylcobalamin biosynthesis; cob(II)yrinate a,c-diamide from precorrin-2 (aerobic route): step 9/10. Catalyzes the ATP-dependent amidation of the two carboxylate groups at positions a and c of hydrogenobyrinate, using either L-glutamine or ammonia as the nitrogen source. This is Hydrogenobyrinate a,c-diamide synthase from Mesorhizobium japonicum (strain LMG 29417 / CECT 9101 / MAFF 303099) (Mesorhizobium loti (strain MAFF 303099)).